The primary structure comprises 342 residues: Dihydroorotate dehydrogenase (quinone) (342 aa).

FMN contacts are provided by residues 61 to 65 (AGLDK) and threonine 85. Lysine 65 serves as a coordination point for substrate. 110-114 (NRMGF) contributes to the substrate binding site. Asparagine 138 and asparagine 171 together coordinate FMN. Asparagine 171 is a substrate binding site. The active-site Nucleophile is the serine 174. Asparagine 176 serves as a coordination point for substrate. Lysine 216 and threonine 244 together coordinate FMN. Position 245 to 246 (245 to 246 (NT)) interacts with substrate. FMN is bound by residues glycine 267, glycine 296, and 317-318 (YS).

This sequence belongs to the dihydroorotate dehydrogenase family. Type 2 subfamily. As to quaternary structure, monomer. It depends on FMN as a cofactor.

Its subcellular location is the cell membrane. It carries out the reaction (S)-dihydroorotate + a quinone = orotate + a quinol. It participates in pyrimidine metabolism; UMP biosynthesis via de novo pathway; orotate from (S)-dihydroorotate (quinone route): step 1/1. Functionally, catalyzes the conversion of dihydroorotate to orotate with quinone as electron acceptor. In Pseudomonas aeruginosa (strain UCBPP-PA14), this protein is Dihydroorotate dehydrogenase (quinone).